The chain runs to 704 residues: Metabotropic glutamate receptor-like protein K (704 aa).

Residues Met1 to Ser21 form the signal peptide. At Phe22–Gln383 the chain is on the extracellular side. Asn66, Asn104, Asn256, Asn286, Asn308, Asn337, Asn343, and Asn368 each carry an N-linked (GlcNAc...) asparagine glycan. A helical membrane pass occupies residues Ile384–Ile404. The Cytoplasmic segment spans residues Val405 to Ser419. A helical membrane pass occupies residues Phe420–Ala440. At Pro441–Thr455 the chain is on the extracellular side. A helical transmembrane segment spans residues Ile456 to Phe476. Residues Asp477–Tyr492 are Cytoplasmic-facing. A helical transmembrane segment spans residues Pro493 to Gly513. Residues Asp514–Gly541 lie on the Extracellular side of the membrane. Asn538 carries N-linked (GlcNAc...) asparagine glycosylation. A helical transmembrane segment spans residues Ala542–Val562. Residues Ser563 to Thr578 lie on the Cytoplasmic side of the membrane. A helical transmembrane segment spans residues Ala579 to Ile599. Residues Ser600–Thr608 are Extracellular-facing. Residues Ile609–Pro629 form a helical membrane-spanning segment. Topologically, residues Lys630–Lys704 are cytoplasmic. Disordered regions lie at residues Ala657–Ser677 and Ser685–Lys704.

In the N-terminal section; belongs to the BMP lipoprotein family. This sequence in the C-terminal section; belongs to the G-protein coupled receptor 3 family. GABA-B receptor subfamily.

The protein resides in the membrane. The sequence is that of Metabotropic glutamate receptor-like protein K (grlK) from Dictyostelium discoideum (Social amoeba).